We begin with the raw amino-acid sequence, 132 residues long: Sec-independent protein translocase protein TatB (132 aa).

A helical membrane pass occupies residues 1–21 (MFDIGFWELVLISVVGLVVLG). The segment at 70–132 (GMEDLSPELK…KVSAADKKAE (63 aa)) is disordered. Basic and acidic residues-rich tracts occupy residues 96–108 (YADK…ETAK) and 115–132 (SAEK…KKAE).

This sequence belongs to the TatB family. As to quaternary structure, the Tat system comprises two distinct complexes: a TatABC complex, containing multiple copies of TatA, TatB and TatC subunits, and a separate TatA complex, containing only TatA subunits. Substrates initially bind to the TatABC complex, which probably triggers association of the separate TatA complex to form the active translocon.

It is found in the cell inner membrane. Functionally, part of the twin-arginine translocation (Tat) system that transports large folded proteins containing a characteristic twin-arginine motif in their signal peptide across membranes. Together with TatC, TatB is part of a receptor directly interacting with Tat signal peptides. TatB may form an oligomeric binding site that transiently accommodates folded Tat precursor proteins before their translocation. In Vibrio parahaemolyticus serotype O3:K6 (strain RIMD 2210633), this protein is Sec-independent protein translocase protein TatB.